Consider the following 214-residue polypeptide: Adenylate kinase (214 aa).

Residue 10–15 (GAGKGT) participates in ATP binding. Residues 30-59 (STGDMLRAAVKAGTPLGLEAKKVMDAGQLV) form an NMP region. AMP contacts are provided by residues Thr31, Arg36, 57-59 (QLV), 85-88 (GFPR), and Gln92. The segment at 122–159 (GRRVHSGSGRVYHVVFNPPKVEGKDDVTGEDLSIRPDD) is LID. ATP is bound by residues Arg123 and 132-133 (VY). Residues Arg156 and Arg167 each coordinate AMP. Gln200 serves as a coordination point for ATP.

Belongs to the adenylate kinase family. In terms of assembly, monomer.

The protein resides in the cytoplasm. It catalyses the reaction AMP + ATP = 2 ADP. The protein operates within purine metabolism; AMP biosynthesis via salvage pathway; AMP from ADP: step 1/1. In terms of biological role, catalyzes the reversible transfer of the terminal phosphate group between ATP and AMP. Plays an important role in cellular energy homeostasis and in adenine nucleotide metabolism. This is Adenylate kinase from Shewanella frigidimarina (strain NCIMB 400).